The chain runs to 440 residues: Gap junction gamma-2 protein (440 aa).

Over 1–21 the chain is Cytoplasmic; the sequence is MTNMSWSFLTRLLEEIHNHST. Residues 22-42 form a helical membrane-spanning segment; sequence FVGKVWLTVLVVFRIVLTAVG. Topologically, residues 43–78 are extracellular; that stretch reads GESIYSDEQSKFTCNTRQPGCDNVCYDAFAPLSHVR. The helical transmembrane segment at 79–99 threads the bilayer; it reads FWVFQIVVISTPSVMYLGYAV. The Cytoplasmic portion of the chain corresponds to 100–223; that stretch reads HRLARASEQE…AQLVVRAAFE (124 aa). The tract at residues 108 to 199 is disordered; sequence QERRRALRRR…TPGPAGQHDG (92 aa). Residues 112–124 show a composition bias toward basic residues; it reads RALRRRPGTRRLP. The segment covering 136-149 has biased composition (low complexity); the sequence is PDTTDLGEAEPILA. Positions 150–173 are enriched in acidic residues; the sequence is LEEDEDEEPGAPEGPGEDTEEERA. Residues 224 to 244 form a helical membrane-spanning segment; sequence VAFLVGQYLLYGFEVPPFFAC. At 245–264 the chain is on the extracellular side; it reads SRQPCPHVVDCFVSRPTEKT. A helical membrane pass occupies residues 265-285; sequence VFLLVMYVVSCLCLLLNLCEM. The Cytoplasmic segment spans residues 286 to 440; sequence AHLGLGSAQD…SRDGKATVWI (155 aa). Positions 369-440 are disordered; the sequence is DRDSPPCAGL…SRDGKATVWI (72 aa). Position 372 is a phosphoserine (S372). Residues 388–401 show a composition bias toward low complexity; that stretch reads VGGLASGTGSATSG.

This sequence belongs to the connexin family. Gamma-type subfamily. In terms of assembly, a connexon is composed of a hexamer of connexins. Interacts with TJP1. As to expression, mainly expressed by oligodendrocytes in the central nervous system (at protein level).

The protein localises to the cell membrane. The protein resides in the cell junction. It is found in the gap junction. Its function is as follows. One gap junction consists of a cluster of closely packed pairs of transmembrane channels, the connexons, through which materials of low MW diffuse from one cell to a neighboring cell. May play a role in myelination in central and peripheral nervous systems. This Mus musculus (Mouse) protein is Gap junction gamma-2 protein (Gjc2).